The chain runs to 990 residues: Bifunctional glutamine synthetase adenylyltransferase/adenylyl-removing enzyme (990 aa).

The interval 1 to 474 (MIFSAITADL…HYAKLFEGDP (474 aa)) is adenylyl removase. The adenylyl transferase stretch occupies residues 478–990 (AKLPPVDYGA…FSRLIGGEDA (513 aa)).

The protein belongs to the GlnE family. Requires Mg(2+) as cofactor.

It carries out the reaction [glutamine synthetase]-O(4)-(5'-adenylyl)-L-tyrosine + phosphate = [glutamine synthetase]-L-tyrosine + ADP. The enzyme catalyses [glutamine synthetase]-L-tyrosine + ATP = [glutamine synthetase]-O(4)-(5'-adenylyl)-L-tyrosine + diphosphate. Functionally, involved in the regulation of glutamine synthetase GlnA, a key enzyme in the process to assimilate ammonia. When cellular nitrogen levels are high, the C-terminal adenylyl transferase (AT) inactivates GlnA by covalent transfer of an adenylyl group from ATP to specific tyrosine residue of GlnA, thus reducing its activity. Conversely, when nitrogen levels are low, the N-terminal adenylyl removase (AR) activates GlnA by removing the adenylyl group by phosphorolysis, increasing its activity. The regulatory region of GlnE binds the signal transduction protein PII (GlnB) which indicates the nitrogen status of the cell. This Rhodopseudomonas palustris (strain ATCC BAA-98 / CGA009) protein is Bifunctional glutamine synthetase adenylyltransferase/adenylyl-removing enzyme.